Consider the following 316-residue polypeptide: Ribosomal protein L11 methyltransferase (316 aa).

Residues T157, G178, D200, and N243 each contribute to the S-adenosyl-L-methionine site.

It belongs to the methyltransferase superfamily. PrmA family.

The protein resides in the cytoplasm. It catalyses the reaction L-lysyl-[protein] + 3 S-adenosyl-L-methionine = N(6),N(6),N(6)-trimethyl-L-lysyl-[protein] + 3 S-adenosyl-L-homocysteine + 3 H(+). Functionally, methylates ribosomal protein L11. The chain is Ribosomal protein L11 methyltransferase from Streptococcus pneumoniae serotype 4 (strain ATCC BAA-334 / TIGR4).